Here is a 469-residue protein sequence, read N- to C-terminus: Diaminobutyrate--2-oxoglutarate transaminase (469 aa).

Lys290 is modified (N6-(pyridoxal phosphate)lysine).

This sequence belongs to the class-III pyridoxal-phosphate-dependent aminotransferase family. Requires pyridoxal 5'-phosphate as cofactor.

The protein localises to the cytoplasm. The enzyme catalyses L-2,4-diaminobutanoate + 2-oxoglutarate = L-aspartate 4-semialdehyde + L-glutamate. Functionally, involved in the degradation of ectoine, which allows H.elongata to utilize ectoine as both a carbon and a nitrogen source for growth. Probably catalyzes the conversion of L-2,4-diaminobutyrate (DABA) to L-aspartate beta-semialdehyde (ASA) by transamination with 2-oxoglutarate. The chain is Diaminobutyrate--2-oxoglutarate transaminase from Halomonas elongata (strain ATCC 33173 / DSM 2581 / NBRC 15536 / NCIMB 2198 / 1H9).